Here is a 284-residue protein sequence, read N- to C-terminus: 2-dehydro-3-deoxyphosphooctonate aldolase (284 aa).

This sequence belongs to the KdsA family.

The protein localises to the cytoplasm. It carries out the reaction D-arabinose 5-phosphate + phosphoenolpyruvate + H2O = 3-deoxy-alpha-D-manno-2-octulosonate-8-phosphate + phosphate. It functions in the pathway carbohydrate biosynthesis; 3-deoxy-D-manno-octulosonate biosynthesis; 3-deoxy-D-manno-octulosonate from D-ribulose 5-phosphate: step 2/3. It participates in bacterial outer membrane biogenesis; lipopolysaccharide biosynthesis. This chain is 2-dehydro-3-deoxyphosphooctonate aldolase, found in Burkholderia cenocepacia (strain HI2424).